The following is a 103-amino-acid chain: O2 contryphan Vc1 (103 aa).

A signal peptide spans 1–23 (MGKLTILFLVAAALLSTQVMVQG). A propeptide spanning residues 24 to 67 (DGAHERTEAEEPQHHGAKRQDGTGGYPVDDVDMMQRIFRTPLKR) is cleaved from the precursor. The span at 25–44 (GAHERTEAEEPQHHGAKRQD) shows a compositional bias: basic and acidic residues. Residues 25–50 (GAHERTEAEEPQHHGAKRQDGTGGYP) form a disordered region. Residue glutamine 68 is modified to Pyrrolidone carboxylic acid. An intrachain disulfide couples cysteine 70 to cysteine 83. Residues 99 to 103 (RRGRQ) constitute a propeptide that is removed on maturation.

This sequence belongs to the O2 superfamily. In terms of processing, pyrrolidone carboxylic acid at position 1 has no significant effect on the structure of contryphan-Vc1. As to expression, expressed by the venom gland.

The protein resides in the secreted. Unknown. Intracranial injection of the peptide into mice does not produce toxic effects. In addition, the peptide does not produce any observable changes to normal or depolarization-induced intracellular calcium levels in mouse dorsal root ganglion cells. This chain is O2 contryphan Vc1, found in Conus victoriae (Queen Victoria cone).